Consider the following 554-residue polypeptide: DnaJ homolog subfamily C member 1 (554 aa).

The N-terminal stretch at 1-47 (MTAPCSQPAQLPGRRQLGLVPFPPPPPRTPLLWLLLLLLAAVAPARG) is a signal peptide. At 48-153 (WESGDLELFD…RRVRKMSNAE (106 aa)) the chain is on the lumenal side. Residues 65–129 (NFYQFLGVQQ…ERRQRYDDIL (65 aa)) enclose the J domain. The chain crosses the membrane as a helical span at residues 154-174 (LALLLFIILTVGHYAVVWSIY). Residues 175 to 554 (LEKQLDELLS…LVQKKKQAKS (380 aa)) lie on the Cytoplasmic side of the membrane. The SANT 1 domain occupies 325-379 (KQAPEWTEEDLSQLTRSMVKFPGGTPGRWEKIAHELGRSVTDVTTKAKQLKDSVT). S381 is modified (phosphoserine). Residues 392–405 (STVQNSRPIKTATT) show a composition bias toward polar residues. Residues 392–500 (STVQNSRPIK…RSAEEPWTQN (109 aa)) are disordered. Positions 421–432 (AAEEEQEGDSGE) are enriched in acidic residues. Phosphoserine is present on S430. Over residues 455-472 (AKPEPEEKSRAKRQKDFD) the composition is skewed to basic and acidic residues. Acidic residues predominate over residues 473-482 (IAEQNESSDE). Residues S479, S480, S484, and S492 each carry the phosphoserine modification. The span at 483–494 (ESLRKERARSAE) shows a compositional bias: basic and acidic residues. Residues 492-547 (SAEEPWTQNQQKLLELALQQYPRGSSDRWDKIARCVPSKSKEDCIARYKLLVELVQ) form the SANT 2 domain.

In terms of assembly, interacts (via J domain) with HSPA5. Interacts (via cytosolic domain) with ribosomes. Interacts (via SANT 2 domain) with SERPINA3; the interaction delays the formation of the covalent inhibitory complex SERPINA3-chymotrypsin, but does not alter the catalytic activity of SERPINA3. Interacts (via SANT 2 domain) with ITIH4 (via C-terminus); the interaction protects ITIH4 against in vitro cleavage by kallikrein.

The protein resides in the endoplasmic reticulum membrane. It localises to the nucleus membrane. The protein localises to the microsome membrane. In terms of biological role, may modulate protein synthesis. The sequence is that of DnaJ homolog subfamily C member 1 (DNAJC1) from Homo sapiens (Human).